The following is a 213-amino-acid chain: Probable glutathione S-transferase DHAR1, cytosolic (213 aa).

The glutathione site is built by K8 and D19. The L-ascorbate site is built by K8 and D19. The region spanning 10-89 is the GST N-terminal domain; the sequence is AVGHPDTLGD…VIEEKYPTPS (80 aa). Residue C20 is the Nucleophile of the active site. Positions 47, 60, 74, 160, and 207 each coordinate glutathione. Positions 73–213 constitute a GST C-terminal domain; the sequence is DSDVITQVIE…IAGWAPKVNA (141 aa). K210 provides a ligand contact to L-ascorbate.

This sequence belongs to the GST superfamily. DHAR family. Monomer.

Its subcellular location is the cytoplasm. The protein localises to the cytosol. The enzyme catalyses RX + glutathione = an S-substituted glutathione + a halide anion + H(+). It carries out the reaction L-dehydroascorbate + 2 glutathione = glutathione disulfide + L-ascorbate. In terms of biological role, involved in ascorbate homeostasis. Maintains redox pools of ascorbate by recycling dihydroascorbate (DHA) to ascorbate. Involved in scavenging reactive oxygen species (ROS) under oxidative stresses. Possesses dehydroascorbate reductase (DHAR) activity in vitro. May function via a ping-pong reaction mechanism with an electron transfer at the active site. Possesses chaperone-like activity in vitro. The protein is Probable glutathione S-transferase DHAR1, cytosolic of Oryza sativa subsp. japonica (Rice).